A 500-amino-acid chain; its full sequence is Xylan O-acetyltransferase 2 (500 aa).

The Cytoplasmic portion of the chain corresponds to 1-25 (MGLPGRRNPLLSARRAAASLRRSRR). A helical; Signal-anchor for type II membrane protein membrane pass occupies residues 26–43 (LPVYVAAVFFVASVLLMF). The Lumenal portion of the chain corresponds to 44 to 500 (RDEILYLTTA…RPPAAAGHVA (457 aa)). The segment at 84–116 (PVLLGHGGKPEKHHSVTERHRPKVSAKRRPNKK) is disordered. Residues 91–102 (GKPEKHHSVTER) are compositionally biased toward basic and acidic residues. Residues 103 to 116 (HRPKVSAKRRPNKK) show a composition bias toward basic residues. 4 cysteine pairs are disulfide-bonded: C143-C194, C165-C231, C174-C472, and C388-C468. N-linked (GlcNAc...) asparagine glycans are attached at residues N144 and N154. Residues 218 to 220 (GDS) carry the GDS motif motif. S220 functions as the Nucleophile in the catalytic mechanism. N260 and N416 each carry an N-linked (GlcNAc...) asparagine glycan. Catalysis depends on D467, which acts as the Proton donor. The DXXH motif motif lies at 467-470 (DCIH). Catalysis depends on H470, which acts as the Proton acceptor.

It belongs to the PC-esterase family. TBL subfamily. In terms of tissue distribution, expressed at low levels in roots and leaves.

It localises to the golgi apparatus membrane. In terms of biological role, xylan acetyltransferase required for 2-O- and 3-O-monoacetylation of xylosyl residues in xylan. Catalyzes the 2-O-acetylation of xylan, followed by nonenzymatic acetyl migration to the O-3 position, resulting in products that are monoacetylated at both O-2 and O-3 positions. This Oryza sativa subsp. japonica (Rice) protein is Xylan O-acetyltransferase 2.